We begin with the raw amino-acid sequence, 987 residues long: Ephrin type-B receptor 4 (987 aa).

The first 15 residues, 1-15, serve as a signal peptide directing secretion; that stretch reads MELRVLLCWASLAAA. The Extracellular portion of the chain corresponds to 16–539; it reads LEETLLNTKL…ESEGWREQLA (524 aa). Residues 17–202 enclose the Eph LBD domain; sequence EETLLNTKLE…FYKKCAQLTV (186 aa). Disulfide bonds link Cys-61-Cys-184 and Cys-97-Cys-107. 3 N-linked (GlcNAc...) asparagine glycosylation sites follow: Asn-203, Asn-335, and Asn-426. Fibronectin type-III domains follow at residues 323–432 and 436–529; these read PPSA…TDRE and AVSD…TQLD. The helical transmembrane segment at 540 to 560 threads the bilayer; it reads LIAGTAVVGVVLVLVVIVVAV. Residues 561-987 are Cytoplasmic-facing; it reads LCLRKQSNGR…GGTGGPAPQY (427 aa). The region spanning 615–899 is the Protein kinase domain; sequence VKIEEVIGAG…ENGGASHPLL (285 aa). ATP is bound by residues 621–629 and Lys-647; that span reads IGAGEFGEV. Asp-740 (proton acceptor) is an active-site residue. Ser-769, Ser-770, Ser-911, and Ser-943 each carry phosphoserine. The SAM domain maps to 907 to 971; that stretch reads SAFGSVGEWL…LASVQHMKSQ (65 aa). The tract at residues 965–987 is disordered; it reads VQHMKSQAKPGTPGGTGGPAPQY. At Thr-976 the chain carries Phosphothreonine. The segment covering 976–987 has biased composition (gly residues); sequence TPGGTGGPAPQY. Positions 985–987 match the PDZ-binding motif; sequence PQY. Tyr-987 bears the Phosphotyrosine mark.

Belongs to the protein kinase superfamily. Tyr protein kinase family. Ephrin receptor subfamily. Heterotetramer upon binding of the ligand. The heterotetramer is composed of an ephrin dimer and a receptor dimer. Oligomerization is probably required to induce biological responses. Interacts with RASA1; the interaction depends on EPHB4 tyrosine-phosphorylation. In terms of processing, phosphorylated; autophosphorylation is stimulated by EFNB2. As to expression, abundantly expressed in placenta but also detected in kidney, liver, lung, pancreas, skeletal muscle and heart. Expressed in primitive and myeloid, but not lymphoid, hematopoietic cells. Also observed in cell lines derived from liver, breast, colon, lung, melanocyte and cervix.

It localises to the cell membrane. The catalysed reaction is L-tyrosyl-[protein] + ATP = O-phospho-L-tyrosyl-[protein] + ADP + H(+). Its function is as follows. Receptor tyrosine kinase which binds promiscuously transmembrane ephrin-B family ligands residing on adjacent cells, leading to contact-dependent bidirectional signaling into neighboring cells. The signaling pathway downstream of the receptor is referred to as forward signaling while the signaling pathway downstream of the ephrin ligand is referred to as reverse signaling. Together with its cognate ligand/functional ligand EFNB2 it is involved in the regulation of cell adhesion and migration, and plays a central role in heart morphogenesis, angiogenesis and blood vessel remodeling and permeability. EPHB4-mediated forward signaling controls cellular repulsion and segregation from EFNB2-expressing cells. The polypeptide is Ephrin type-B receptor 4 (EPHB4) (Homo sapiens (Human)).